The sequence spans 426 residues: Cytochrome c biogenesis protein CcsB (426 aa).

The next 3 helical transmembrane spans lie at 11 to 31 (LRVAIVLLFLIALASAVGTAI), 69 to 89 (SVWFLSLLAWLGLALILCSWR), and 159 to 179 (VGPLLVHTGLILLMLGAVWGV).

This sequence belongs to the Ccs1/CcsB family. As to quaternary structure, may interact with CcsA.

The protein localises to the cellular thylakoid membrane. Required during biogenesis of c-type cytochromes (cytochrome c6 and cytochrome f) at the step of heme attachment. This chain is Cytochrome c biogenesis protein CcsB, found in Synechococcus sp. (strain CC9902).